The primary structure comprises 392 residues: Formate-dependent phosphoribosylglycinamide formyltransferase (392 aa).

N(1)-(5-phospho-beta-D-ribosyl)glycinamide contacts are provided by residues 22–23 (EL) and Glu-82. ATP contacts are provided by residues Arg-114, Lys-155, 160–165 (SSGKGQ), 195–198 (EGEV), and Glu-203. In terms of domain architecture, ATP-grasp spans 119 to 308 (RLAAETLALP…EFALHVRAFL (190 aa)). Residues Glu-267 and Glu-279 each contribute to the Mg(2+) site. N(1)-(5-phospho-beta-D-ribosyl)glycinamide is bound by residues Asp-286, Lys-355, and 362 to 363 (RR).

It belongs to the PurK/PurT family. As to quaternary structure, homodimer.

The enzyme catalyses N(1)-(5-phospho-beta-D-ribosyl)glycinamide + formate + ATP = N(2)-formyl-N(1)-(5-phospho-beta-D-ribosyl)glycinamide + ADP + phosphate + H(+). It functions in the pathway purine metabolism; IMP biosynthesis via de novo pathway; N(2)-formyl-N(1)-(5-phospho-D-ribosyl)glycinamide from N(1)-(5-phospho-D-ribosyl)glycinamide (formate route): step 1/1. Functionally, involved in the de novo purine biosynthesis. Catalyzes the transfer of formate to 5-phospho-ribosyl-glycinamide (GAR), producing 5-phospho-ribosyl-N-formylglycinamide (FGAR). Formate is provided by PurU via hydrolysis of 10-formyl-tetrahydrofolate. The protein is Formate-dependent phosphoribosylglycinamide formyltransferase of Edwardsiella ictaluri (strain 93-146).